Consider the following 237-residue polypeptide: uncharacterized protein (237 aa).

The N-terminal stretch at Met-1 to Ala-28 is a signal peptide.

This is an uncharacterized protein from Sinorhizobium fredii (strain NBRC 101917 / NGR234).